The following is a 469-amino-acid chain: Adenosylhomocysteinase (469 aa).

The substrate site is built by threonine 63, aspartate 139, and glutamate 164. 165 to 167 (TTT) is an NAD(+) binding site. The substrate site is built by lysine 194 and aspartate 198. NAD(+)-binding positions include asparagine 199, 228 to 233 (GYGDVG), glutamate 251, asparagine 300, 321 to 323 (IGH), and asparagine 375.

It belongs to the adenosylhomocysteinase family. NAD(+) serves as cofactor.

It is found in the cytoplasm. It catalyses the reaction S-adenosyl-L-homocysteine + H2O = L-homocysteine + adenosine. It functions in the pathway amino-acid biosynthesis; L-homocysteine biosynthesis; L-homocysteine from S-adenosyl-L-homocysteine: step 1/1. Its function is as follows. May play a key role in the regulation of the intracellular concentration of adenosylhomocysteine. This chain is Adenosylhomocysteinase, found in Ectopseudomonas mendocina (strain ymp) (Pseudomonas mendocina).